The chain runs to 151 residues: UPF0208 membrane protein YfbV (151 aa).

The Cytoplasmic portion of the chain corresponds to 1 to 45; that stretch reads MSTPDNRSVNFFSLFRRGQHYAKTWPMEKRLAPVFVENRVIRMTR. The helical transmembrane segment at 46–65 threads the bilayer; that stretch reads YAIRFMPPVAVFTLCWQIAL. Residues 66–68 lie on the Periplasmic side of the membrane; it reads GGQ. A helical transmembrane segment spans residues 69–91; that stretch reads LGPAVATALFALSLPMQGLWWLG. The Cytoplasmic portion of the chain corresponds to 92 to 151; that stretch reads KRSLTPLPPSILNWFYEVRGKLQEAGQALAPVEGKPDYQALADTLKRAFKQLDKTFLDDL.

It belongs to the UPF0208 family.

The protein resides in the cell inner membrane. This Salmonella typhi protein is UPF0208 membrane protein YfbV (yfbV).